Reading from the N-terminus, the 433-residue chain is Phosphomethylpyrimidine synthase 2 (433 aa).

Residues asparagine 66, methionine 94, tyrosine 123, histidine 162, 184 to 186 (SRG), 225 to 228 (DALR), and glutamate 264 contribute to the substrate site. Histidine 268 is a Zn(2+) binding site. Tyrosine 291 lines the substrate pocket. Histidine 332 serves as a coordination point for Zn(2+). Positions 408, 411, and 415 each coordinate [4Fe-4S] cluster.

It belongs to the ThiC family. [4Fe-4S] cluster serves as cofactor.

The enzyme catalyses 5-amino-1-(5-phospho-beta-D-ribosyl)imidazole + S-adenosyl-L-methionine = 4-amino-2-methyl-5-(phosphooxymethyl)pyrimidine + CO + 5'-deoxyadenosine + formate + L-methionine + 3 H(+). Its pathway is cofactor biosynthesis; thiamine diphosphate biosynthesis. In terms of biological role, catalyzes the synthesis of the hydroxymethylpyrimidine phosphate (HMP-P) moiety of thiamine from aminoimidazole ribotide (AIR) in a radical S-adenosyl-L-methionine (SAM)-dependent reaction. The sequence is that of Phosphomethylpyrimidine synthase 2 from Saccharolobus solfataricus (strain ATCC 35092 / DSM 1617 / JCM 11322 / P2) (Sulfolobus solfataricus).